The following is a 282-amino-acid chain: Protease HtpX homolog (282 aa).

2 helical membrane passes run 6–26 (TLVL…LIGG) and 29–49 (GATF…FFSH). His-130 serves as a coordination point for Zn(2+). Residue Glu-131 is part of the active site. Position 134 (His-134) interacts with Zn(2+). Transmembrane regions (helical) follow at residues 140-160 (ILIS…AQMA) and 180-200 (IVAL…QLAI). Glu-205 contacts Zn(2+).

Belongs to the peptidase M48B family. It depends on Zn(2+) as a cofactor.

The protein localises to the cell inner membrane. The chain is Protease HtpX homolog from Thermodesulfovibrio yellowstonii (strain ATCC 51303 / DSM 11347 / YP87).